A 617-amino-acid polypeptide reads, in one-letter code: Proline--tRNA ligase (617 aa).

This sequence belongs to the class-II aminoacyl-tRNA synthetase family. ProS type 1 subfamily. In terms of assembly, homodimer.

The protein localises to the cytoplasm. It catalyses the reaction tRNA(Pro) + L-proline + ATP = L-prolyl-tRNA(Pro) + AMP + diphosphate. Catalyzes the attachment of proline to tRNA(Pro) in a two-step reaction: proline is first activated by ATP to form Pro-AMP and then transferred to the acceptor end of tRNA(Pro). As ProRS can inadvertently accommodate and process non-cognate amino acids such as alanine and cysteine, to avoid such errors it has two additional distinct editing activities against alanine. One activity is designated as 'pretransfer' editing and involves the tRNA(Pro)-independent hydrolysis of activated Ala-AMP. The other activity is designated 'posttransfer' editing and involves deacylation of mischarged Ala-tRNA(Pro). The misacylated Cys-tRNA(Pro) is not edited by ProRS. In Streptococcus pneumoniae (strain Hungary19A-6), this protein is Proline--tRNA ligase.